The primary structure comprises 161 residues: E3 ubiquitin ligase complex SCF subunit sconC (161 aa).

Residues 102–161 (ILAANYLDIKGLLDVGCKTVANMIKGKSPEEIRKTFNIQNDFTPEEEDQIRRENEWAEDR) form an interaction with the F-box domain of F-box proteins region.

The protein belongs to the SKP1 family. In terms of assembly, component of the SCF (SKP1-CUL1-F-box protein) E3 ubiquitin ligase complexes.

The protein operates within protein modification; protein ubiquitination. Functionally, essential component of the SCF (SKP1-CUL1-F-box protein) E3 ubiquitin ligase complexes, which mediate the ubiquitination and subsequent proteasomal degradation of target proteins. Controls sulfur metabolite repression, probably by mediating the inactivation or degradation of the metR transcription factor. The polypeptide is E3 ubiquitin ligase complex SCF subunit sconC (sconC) (Aspergillus flavus (strain ATCC 200026 / FGSC A1120 / IAM 13836 / NRRL 3357 / JCM 12722 / SRRC 167)).